We begin with the raw amino-acid sequence, 291 residues long: ATP phosphoribosyltransferase 1 (291 aa).

The protein belongs to the ATP phosphoribosyltransferase family. Long subfamily. Requires Mg(2+) as cofactor.

The protein localises to the cytoplasm. The enzyme catalyses 1-(5-phospho-beta-D-ribosyl)-ATP + diphosphate = 5-phospho-alpha-D-ribose 1-diphosphate + ATP. It functions in the pathway amino-acid biosynthesis; L-histidine biosynthesis; L-histidine from 5-phospho-alpha-D-ribose 1-diphosphate: step 1/9. Its activity is regulated as follows. Feedback inhibited by histidine. Its function is as follows. Catalyzes the condensation of ATP and 5-phosphoribose 1-diphosphate to form N'-(5'-phosphoribosyl)-ATP (PR-ATP). Has a crucial role in the pathway because the rate of histidine biosynthesis seems to be controlled primarily by regulation of HisG enzymatic activity. This chain is ATP phosphoribosyltransferase 1, found in Geobacter sulfurreducens (strain ATCC 51573 / DSM 12127 / PCA).